Reading from the N-terminus, the 391-residue chain is Histidinol-phosphate aminotransferase (391 aa).

K246 is modified (N6-(pyridoxal phosphate)lysine).

The protein belongs to the class-II pyridoxal-phosphate-dependent aminotransferase family. Histidinol-phosphate aminotransferase subfamily. Pyridoxal 5'-phosphate serves as cofactor.

The enzyme catalyses L-histidinol phosphate + 2-oxoglutarate = 3-(imidazol-4-yl)-2-oxopropyl phosphate + L-glutamate. Its pathway is amino-acid biosynthesis; L-histidine biosynthesis; L-histidine from 5-phospho-alpha-D-ribose 1-diphosphate: step 7/9. The polypeptide is Histidinol-phosphate aminotransferase (Methanopyrus kandleri (strain AV19 / DSM 6324 / JCM 9639 / NBRC 100938)).